The sequence spans 453 residues: MTTDTIVAQATAPGRGGVGIIRISGDKATDVAMAVLGHLPKTRYADYCDFKNATGQVIDQGIALFFKGPNSFTGEDVLELQGHGGQIVLDMLIKRVLEVEGIRIAKPGEFSEQAFMNDKLDLTQAEAIADLIDATSEQAAKSALQSLQGEFSKEVHELVDQVTNLRLYVEAAIDFPDEEVDFLSDGKIANALYKIIDKLSTVQASAKQGSIIREGMKVVIAGRPNAGKSSLLNALAGKESAIVTEIAGTTRDVLREHIHLDGMPLHIIDTAGLRDTTDTVEQIGIERAWNEINSADRVLFMVDGTTTDAVDPHDIWPDFINRLPANLGVTVIRNKADLTGENLDMTEEKGYSVYRISAKTGLGVDELKLHLKSLMGYQSNLEGGFIARRRHLEALDVAASHLQLGKEQLEVYLAGELLAEELRMAQIALSEITGRFTSDDLLGKIFSSFCIGK.

3 residues coordinate (6S)-5-formyl-5,6,7,8-tetrahydrofolate: R22, E79, and K119. The region spanning 215–376 is the TrmE-type G domain; sequence GMKVVIAGRP…LKLHLKSLMG (162 aa). A K(+)-binding site is contributed by N225. GTP contacts are provided by residues 225-230, 244-250, 269-272, and 334-337; these read NAGKSS, TEIAGTT, DTAG, and NKAD. S229 contributes to the Mg(2+) binding site. K(+) contacts are provided by T244, I246, and T249. Mg(2+) is bound at residue T250. K453 is a binding site for (6S)-5-formyl-5,6,7,8-tetrahydrofolate.

It belongs to the TRAFAC class TrmE-Era-EngA-EngB-Septin-like GTPase superfamily. TrmE GTPase family. As to quaternary structure, homodimer. Heterotetramer of two MnmE and two MnmG subunits. K(+) serves as cofactor.

Its subcellular location is the cytoplasm. In terms of biological role, exhibits a very high intrinsic GTPase hydrolysis rate. Involved in the addition of a carboxymethylaminomethyl (cmnm) group at the wobble position (U34) of certain tRNAs, forming tRNA-cmnm(5)s(2)U34. This is tRNA modification GTPase MnmE from Shewanella sp. (strain W3-18-1).